Reading from the N-terminus, the 329-residue chain is MTQLFYDTDADLSLLNNKTIAIIGYGSQGHAHALNLKDSGMDVIVGLYKGSKSESKAISDGLKVFSVSEACEKADWIMILLPDEFQKDVYLKEIEPNLKEGKILSFAHGFNIRFGLIKPPSFVDVVMIAPKGPGHTVRWEYQNGQGVPALFAVEQDSSGSARSLAMAYAKGIGGTRAGILETNFKEETETDLFGEQAVLCGGLSELVKSGFETLVEAGYQPELAYFECLHEVKLIVDLMVKGGLSQMRDSISNTAEYGDYVSGKRLINSDTKKEMQKILKDIQDGTFAKNFVEECDKDKPLMTKLREENSKHEIEKVGKSLRSMFSWLK.

In terms of domain architecture, KARI N-terminal Rossmann spans 2–182 (TQLFYDTDAD…GGTRAGILET (181 aa)). Residues 25–28 (YGSQ), serine 51, serine 53, and 83–86 (DEFQ) contribute to the NADP(+) site. Histidine 108 is an active-site residue. Glycine 134 lines the NADP(+) pocket. Positions 183-328 (NFKEETETDL…KSLRSMFSWL (146 aa)) constitute a KARI C-terminal knotted domain. 4 residues coordinate Mg(2+): aspartate 191, glutamate 195, glutamate 227, and glutamate 231. Substrate is bound at residue serine 252.

It belongs to the ketol-acid reductoisomerase family. Mg(2+) is required as a cofactor.

The enzyme catalyses (2R)-2,3-dihydroxy-3-methylbutanoate + NADP(+) = (2S)-2-acetolactate + NADPH + H(+). The catalysed reaction is (2R,3R)-2,3-dihydroxy-3-methylpentanoate + NADP(+) = (S)-2-ethyl-2-hydroxy-3-oxobutanoate + NADPH + H(+). It functions in the pathway amino-acid biosynthesis; L-isoleucine biosynthesis; L-isoleucine from 2-oxobutanoate: step 2/4. The protein operates within amino-acid biosynthesis; L-valine biosynthesis; L-valine from pyruvate: step 2/4. Functionally, involved in the biosynthesis of branched-chain amino acids (BCAA). Catalyzes an alkyl-migration followed by a ketol-acid reduction of (S)-2-acetolactate (S2AL) to yield (R)-2,3-dihydroxy-isovalerate. In the isomerase reaction, S2AL is rearranged via a Mg-dependent methyl migration to produce 3-hydroxy-3-methyl-2-ketobutyrate (HMKB). In the reductase reaction, this 2-ketoacid undergoes a metal-dependent reduction by NADPH to yield (R)-2,3-dihydroxy-isovalerate. The protein is Ketol-acid reductoisomerase (NADP(+)) of Prochlorococcus marinus (strain MIT 9301).